A 526-amino-acid chain; its full sequence is Vang-like protein 2 (526 aa).

A disordered region spans residues M1–E95. Over M1–G109 the chain is Cytoplasmic. The span at S15–K33 shows a compositional bias: basic residues. Basic and acidic residues-rich tracts occupy residues S34–K43 and E58–N68. Low complexity predominate over residues G70–S83. Over residues V84 to E95 the composition is skewed to basic and acidic residues. Residues P110–L130 traverse the membrane as a helical segment. The Extracellular segment spans residues P131 to G148. Residues L149–L169 form a helical membrane-spanning segment. The Cytoplasmic segment spans residues R170 to R178. The chain crosses the membrane as a helical span at residues F179–L199. The Extracellular segment spans residues F200–G215. A helical membrane pass occupies residues I216–V236. At L237–V526 the chain is on the cytoplasmic side. The PDZ-binding signature appears at E523–V526.

Belongs to the Vang family. In terms of assembly, interacts with the PDZ domain of dvl2/dsh. As to expression, ubiquitously expressed at the 4-cell stage. In early somitogenesis, becomes more abundant in anterior neural tissue where expression is seen in the neural tube but not in the notochord.

It localises to the cell membrane. In terms of biological role, plays a role in non-canonical Wnt/planar cell polarity (PCP) signaling to regulate convergent extension cell movements during gastrulation. Acts together with scrib and prickle1 and localizes prickle1 and dvl2/dsh to the plasma membrane. Has an overlapping role with kny during both convergent extension and eye development. In the eye, involved in establishing proper alignment of the anterior neural plate and midline cells expressing shha and shhb/twhh. Has indirect effects on a number of other developmental processes including notochord shape formation, neural progenitor cell morphogenesis, segregation of somites and adaxial cell development. Together with prickle1, required for the posterior (caudal) movement of branchiomotor neurons in the hindbrain independently of, and a few hours after, convergent extension. May be required for cell surface localization of fzd3 and fzd6 in the inner ear. In Danio rerio (Zebrafish), this protein is Vang-like protein 2.